The sequence spans 89 residues: Phytosulfokines 1 (89 aa).

The N-terminal stretch at 1 to 22 is a signal peptide; sequence MVNPGRTARALCLLCLALLLLG. Positions 23–79 are excised as a propeptide; sequence QDTHSRKLLLQEKHSHGVGNGTTTTQEPSRENGGSTGSNNNGQLQFDSAKWEEFHTD. The disordered stretch occupies residues 33–70; that stretch reads QEKHSHGVGNGTTTTQEPSRENGGSTGSNNNGQLQFDS. A glycan (N-linked (GlcNAc...) asparagine) is linked at asparagine 42. Tyrosine 80 and tyrosine 82 each carry sulfotyrosine. Residues 85-89 constitute a propeptide that is removed on maturation; that stretch reads DVKKP.

It belongs to the phytosulfokine family. In terms of processing, sulfation is important for activity and for the binding to a putative membrane receptor. PSK-alpha is produced by endopeptidase digestion. PSK-beta is produced from PSK-alpha by exopeptidase digestion. In terms of tissue distribution, expressed throughout the seedling. More abundant in fragments containing shoot or root apexes where cells proliferate vigorously.

It localises to the secreted. Functionally, promotes plant cell differentiation, organogenesis and somatic embryogenesis as well as cell proliferation. The polypeptide is Phytosulfokines 1 (PSK1) (Oryza sativa subsp. japonica (Rice)).